The chain runs to 461 residues: MLEFLSQQKPKILIIGDFMVDNYTWCDCSRISPEAPVLIAKTLKEDKRLGGAANVYANLKSLGADVFALGVVGDDESGKFLQENLKGEFLIQKGRKTPFKNRIMAHNQQVLRLDEEDISEILLENELIALFDEKIKDFKAVVLSDYAKGVLTPKVCKAVIEKAKVLNIPVLVDPKGSDFNKYSGATLLTPNKKEALEALKFENLEGENLEKGIKKLKEDFSLRYSIITLSEAGIALFDEGLKIAPAKALEVYDVTGAGDSVIAVLAFCLANEIEIFKACELANEAAAVVVSKIGSVSVSFDEIKSFKRVDFEKKIKSKEELLVLLKQNNKKIVFTNGCFDIVHFGHIKYLDKAKRLGDVLIVGLNSDASVKRLKGESRPVNSEFQRACMLAAFYFVDFVVIFDEDTPLELISFLKPDILVKGADYKDKLVVGADIVSRVELIDFEEGFSTSKIIEKIKDKK.

The interval 1–312 (MLEFLSQQKP…IKSFKRVDFE (312 aa)) is ribokinase. 191–194 (NKKE) serves as a coordination point for ATP. Asp-259 is a catalytic residue. Residues 334–461 (FTNGCFDIVH…KIIEKIKDKK (128 aa)) are cytidylyltransferase.

The protein in the N-terminal section; belongs to the carbohydrate kinase PfkB family. In the C-terminal section; belongs to the cytidylyltransferase family. In terms of assembly, homodimer.

The catalysed reaction is D-glycero-beta-D-manno-heptose 7-phosphate + ATP = D-glycero-beta-D-manno-heptose 1,7-bisphosphate + ADP + H(+). It carries out the reaction D-glycero-beta-D-manno-heptose 1-phosphate + ATP + H(+) = ADP-D-glycero-beta-D-manno-heptose + diphosphate. It functions in the pathway nucleotide-sugar biosynthesis; ADP-L-glycero-beta-D-manno-heptose biosynthesis; ADP-L-glycero-beta-D-manno-heptose from D-glycero-beta-D-manno-heptose 7-phosphate: step 1/4. Its pathway is nucleotide-sugar biosynthesis; ADP-L-glycero-beta-D-manno-heptose biosynthesis; ADP-L-glycero-beta-D-manno-heptose from D-glycero-beta-D-manno-heptose 7-phosphate: step 3/4. The protein operates within bacterial outer membrane biogenesis; LOS core biosynthesis. Catalyzes the phosphorylation of D-glycero-D-manno-heptose 7-phosphate at the C-1 position to selectively form D-glycero-beta-D-manno-heptose-1,7-bisphosphate. In terms of biological role, catalyzes the ADP transfer from ATP to D-glycero-beta-D-manno-heptose 1-phosphate, yielding ADP-D-glycero-beta-D-manno-heptose. This is Bifunctional protein HldE (hldE) from Campylobacter jejuni subsp. jejuni serotype O:2 (strain ATCC 700819 / NCTC 11168).